We begin with the raw amino-acid sequence, 409 residues long: Arginine biosynthesis bifunctional protein ArgJ (409 aa).

The substrate site is built by Thr-157, Lys-183, Thr-194, Glu-281, Asn-404, and Ser-409. Thr-194 serves as the catalytic Nucleophile.

This sequence belongs to the ArgJ family. In terms of assembly, heterotetramer of two alpha and two beta chains.

It is found in the cytoplasm. The enzyme catalyses N(2)-acetyl-L-ornithine + L-glutamate = N-acetyl-L-glutamate + L-ornithine. It catalyses the reaction L-glutamate + acetyl-CoA = N-acetyl-L-glutamate + CoA + H(+). Its pathway is amino-acid biosynthesis; L-arginine biosynthesis; L-ornithine and N-acetyl-L-glutamate from L-glutamate and N(2)-acetyl-L-ornithine (cyclic): step 1/1. It functions in the pathway amino-acid biosynthesis; L-arginine biosynthesis; N(2)-acetyl-L-ornithine from L-glutamate: step 1/4. Catalyzes two activities which are involved in the cyclic version of arginine biosynthesis: the synthesis of N-acetylglutamate from glutamate and acetyl-CoA as the acetyl donor, and of ornithine by transacetylation between N(2)-acetylornithine and glutamate. The sequence is that of Arginine biosynthesis bifunctional protein ArgJ from Zymomonas mobilis subsp. mobilis (strain ATCC 31821 / ZM4 / CP4).